A 396-amino-acid chain; its full sequence is Na(+)/H(+) antiporter NhaA (396 aa).

11 helical membrane passes run 14 to 34 (ASGIILIMAAVLAMILANSGL), 59 to 79 (LLLWINDGFMAIFFLLVGLEV), 95 to 115 (TFPAIAAVGGMLAPALIYTFF), 124 to 144 (AGWAIPAATDIAFALGVMALL), 154 to 174 (VFLLALAIMDDLGVIIIIALF), 178 to 198 (QLSLEALAVGILATLTLLWMN), 205 to 225 (IGLYMLVGLVLWVAVLKSGVH), 254 to 274 (ALHPWSAYLILPLFAFANAGV), 278 to 298 (GIGLSSLLSPVPMGIMLGLFV), 328 to 348 (IFAVSILCGIGFTMSMFIASL), and 363 to 383 (LGILVGSTLAAVVGYLALRMS).

It belongs to the NhaA Na(+)/H(+) (TC 2.A.33) antiporter family.

Its subcellular location is the cell inner membrane. It carries out the reaction Na(+)(in) + 2 H(+)(out) = Na(+)(out) + 2 H(+)(in). In terms of biological role, na(+)/H(+) antiporter that extrudes sodium in exchange for external protons. The protein is Na(+)/H(+) antiporter NhaA of Aeromonas salmonicida (strain A449).